The following is a 155-amino-acid chain: UPF0225 protein PC1_1977 (155 aa).

It belongs to the UPF0225 family.

The chain is UPF0225 protein PC1_1977 from Pectobacterium carotovorum subsp. carotovorum (strain PC1).